A 273-amino-acid chain; its full sequence is Undecaprenyl-diphosphatase (273 aa).

Helical transmembrane passes span 7-27, 45-65, 89-109, 115-135, 152-171, 189-209, 221-241, and 253-273; these read LWIAAILGLVEGLTEFLPVSS, AETFEVVIQLGSILAVVVMFW, LTLIHILLGMVPAVVIGLLLH, LFNPVNVMYALVVGGVLLIAA, TYRQAFMIGCFQCLALWPGF, YAASEFSFLLAVPMMIGATGL, ADFPMFAVGFVTAFIVALIAI, and FIPFAIYRFIVAAAVYALFVL.

The protein belongs to the UppP family.

The protein localises to the cell inner membrane. It carries out the reaction di-trans,octa-cis-undecaprenyl diphosphate + H2O = di-trans,octa-cis-undecaprenyl phosphate + phosphate + H(+). Functionally, catalyzes the dephosphorylation of undecaprenyl diphosphate (UPP). Confers resistance to bacitracin. In Erwinia tasmaniensis (strain DSM 17950 / CFBP 7177 / CIP 109463 / NCPPB 4357 / Et1/99), this protein is Undecaprenyl-diphosphatase.